Reading from the N-terminus, the 933-residue chain is Clumping factor A (933 aa).

The first 39 residues, 1–39 (MNMKKKEKHAIRKKSIGVASVLVGTLIGFGLLSSKEADA), serve as a signal peptide directing secretion. A YSIRK-G/S signaling motif motif is present at residues 9-20 (HAIRKKSIGVAS). Disordered regions lie at residues 34–200 (SKEA…SNKD) and 529–904 (FNNG…SEDE). The interval 40 to 542 (SENSVTQSDS…SGSGDGIDKP (503 aa)) is ligand binding A region. A compositionally biased stretch (low complexity) spans 47 to 65 (SDSASNESKSNDSSSVSAA). Residues 71–105 (TNVSDTKTSSNTNNGETSVAQNPAQQETTQSSSTN) are compositionally biased toward polar residues. Low complexity predominate over residues 106–132 (ATTEETPVTGEATTTTTNQANTPATTQ). Positions 133 to 200 (SSNTNAEELV…PQSTDASNKD (68 aa)) are enriched in polar residues. Residues 547–565 (QPDEPGEIEPIPEDSDSDP) are compositionally biased toward acidic residues. A compositionally biased stretch (low complexity) spans 566 to 598 (GSDSGSDSNSDSGSDSGSDSTSDSGSDSASDSD). Residues 599–861 (SASDSDSASD…DSDSESDSNS (263 aa)) are compositionally biased toward acidic residues. Positions 862–880 (DSESGSNNNVVPPNSPKNG) are enriched in low complexity. Residues 887–896 (NEAKDSKEPL) are compositionally biased toward basic and acidic residues. The short motif at 896–900 (LPDTG) is the LPXTG sorting signal element. Residue T899 is modified to Pentaglycyl murein peptidoglycan amidated threonine. Positions 900 to 933 (GSEDEANTSLIWGLLASIGSLLLFRRKKENKDKK) are cleaved as a propeptide — removed by sortase.

This sequence belongs to the serine-aspartate repeat-containing protein (SDr) family.

The protein resides in the secreted. The protein localises to the cell wall. Cell surface-associated protein implicated in virulence. Promotes bacterial attachment exclusively to the gamma-chain of human fibrinogen. Induces formation of bacterial clumps, which diminish the ability of group IIA phospholipase A2 to cause bacterial phospholipid hydrolysis and killing. Significantly decreases macrophage phagocytosis possibly thanks to the clumps, clumped bacteria being too large to be phagocytosed. Dominant factor responsible for human platelet aggregation, which may be an important mechanism for initiating infective endocarditis. Enhances spleen cell proliferative response in vitro, contributing significantly to the immunostimulatory activity of S.aureus. The protein is Clumping factor A (clfA) of Staphylococcus aureus (strain Newman).